The primary structure comprises 116 residues: Large ribosomal subunit protein bL17 (116 aa).

Belongs to the bacterial ribosomal protein bL17 family. As to quaternary structure, part of the 50S ribosomal subunit. Contacts protein L32.

The polypeptide is Large ribosomal subunit protein bL17 (Prochlorococcus marinus (strain MIT 9211)).